Here is a 380-residue protein sequence, read N- to C-terminus: Tryptophan 2,3-dioxygenase (380 aa).

Substrate contacts are provided by residues 57–61 (FIITH) and Arg128. His313 lines the heme pocket. Thr328 provides a ligand contact to substrate.

This sequence belongs to the tryptophan 2,3-dioxygenase family. In terms of assembly, homotetramer. Dimer of dimers. The cofactor is heme.

It carries out the reaction L-tryptophan + O2 = N-formyl-L-kynurenine. It functions in the pathway amino-acid degradation; L-tryptophan degradation via kynurenine pathway; L-kynurenine from L-tryptophan: step 1/2. It participates in pigment biosynthesis; ommochrome biosynthesis. Functionally, heme-dependent dioxygenase that catalyzes the oxidative cleavage of the L-tryptophan (L-Trp) pyrrole ring and converts L-tryptophan to N-formyl-L-kynurenine. Catalyzes the oxidative cleavage of the indole moiety. The chain is Tryptophan 2,3-dioxygenase from Drosophila virilis (Fruit fly).